A 60-amino-acid polypeptide reads, in one-letter code: Large ribosomal subunit protein uL30 (60 aa).

Belongs to the universal ribosomal protein uL30 family. Part of the 50S ribosomal subunit.

This Bacillus cereus (strain G9842) protein is Large ribosomal subunit protein uL30.